We begin with the raw amino-acid sequence, 529 residues long: Delayed-rectifier potassium channel regulatory subunit KCNS1 (529 aa).

Residues Met-1–Leu-217 are Cytoplasmic-facing. Residues Pro-218–Ile-239 traverse the membrane as a helical segment. Residues His-240 to Pro-270 lie on the Extracellular side of the membrane. A helical transmembrane segment spans residues Val-271–Leu-293. Residues Ala-294 to Pro-304 lie on the Cytoplasmic side of the membrane. A helical transmembrane segment spans residues Leu-305 to Ala-322. Topologically, residues Gly-323–Leu-340 are extracellular. Residues Gly-341–His-361 form a helical; Voltage-sensor membrane-spanning segment. Topologically, residues Ser-362 to Tyr-376 are cytoplasmic. Residues Arg-377–Tyr-398 form a helical membrane-spanning segment. Topologically, residues Thr-399–Ile-411 are extracellular. Positions Pro-412–Thr-423 form an intramembrane region, helical. A Selectivity filter motif is present at residues Thr-424–Asp-429. An intramembrane segment occupies Thr-424–Val-431. At Pro-432 to Lys-438 the chain is on the extracellular side. The chain crosses the membrane as a helical span at residues Leu-439–Tyr-467. The Cytoplasmic portion of the chain corresponds to Arg-468 to Tyr-529. Residues Gly-494–Tyr-529 form a disordered region. Over residues Thr-502–Asp-514 the composition is skewed to basic and acidic residues.

The protein belongs to the potassium channel family. S (TC 1.A.1.2) subfamily. Kv9.1/KCNS1 sub-subfamily. As to quaternary structure, heterotetramer with KCNB1. Heterotetramer with KCNB2. Does not form homomultimers.

Its subcellular location is the cell membrane. Potassium channel regulatory subunit that modulate the delayed rectifier voltage-gated potassium channel activity of KCNB1 and KCNB2 by altering their kinetics, expression levels, and shifting the half-inactivation potential to more polarized values. While it does not form functional channels on its own, it can form functional heterotetrameric channels with KCNB1 and KCNB2. Each regulatory subunit has unique regulatory properties that can lead to extensive inhibition, significant changes in kinetics, and/or substantial shifts in the voltage dependencies of the inactivation process. In Macaca mulatta (Rhesus macaque), this protein is Delayed-rectifier potassium channel regulatory subunit KCNS1.